A 170-amino-acid polypeptide reads, in one-letter code: Shikimate kinase (170 aa).

15–20 (GTGKTT) is a binding site for ATP. Position 19 (T19) interacts with Mg(2+). Substrate is bound by residues D37, R61, and G82. ATP is bound at residue R120. R138 lines the substrate pocket. An ATP-binding site is contributed by Q154.

The protein belongs to the shikimate kinase family. In terms of assembly, monomer. Mg(2+) serves as cofactor.

The protein localises to the cytoplasm. It carries out the reaction shikimate + ATP = 3-phosphoshikimate + ADP + H(+). It participates in metabolic intermediate biosynthesis; chorismate biosynthesis; chorismate from D-erythrose 4-phosphate and phosphoenolpyruvate: step 5/7. Functionally, catalyzes the specific phosphorylation of the 3-hydroxyl group of shikimic acid using ATP as a cosubstrate. This chain is Shikimate kinase, found in Staphylococcus epidermidis (strain ATCC 35984 / DSM 28319 / BCRC 17069 / CCUG 31568 / BM 3577 / RP62A).